The sequence spans 284 residues: MRKRIWVGLPLALVFGGIFAFHTVFHIPEQPEMTTISDGSFNQQLHCYESSTRASIDQEGSLNLLVWNIYKQNRANWQSVLTQMSAGAQLILLQEASLEDGLKRWIASGGWSGEQVNAFKAFDKAAGVLTLGWRKPRLACGYTQLEPWIRLPKSGLYSEYLLSDGQMLIVVNLHAVNFTWGVQEYQQQVNDLIAALKEHPGPAIVAGDFNTWSEKRLQAVTERLENAGLIEVVFSPDQRTRFITGLPLDHVFYKGLEVQKAEAPQTDASDHNPLLVSFTLPTDK.

It belongs to the UPF0294 family.

The protein localises to the cytoplasm. This chain is UPF0294 protein VV1_1880, found in Vibrio vulnificus (strain CMCP6).